A 308-amino-acid chain; its full sequence is Ornithine carbamoyltransferase (308 aa).

Carbamoyl phosphate is bound by residues 55–58, glutamine 82, arginine 106, and 133–136; these read STRT and HPCQ. L-ornithine is bound by residues asparagine 164, aspartate 227, and 231-232; that span reads SM. Residues 267-268 and arginine 295 contribute to the carbamoyl phosphate site; that span reads CL.

This sequence belongs to the aspartate/ornithine carbamoyltransferase superfamily. OTCase family.

The protein localises to the cytoplasm. It carries out the reaction carbamoyl phosphate + L-ornithine = L-citrulline + phosphate + H(+). Its pathway is amino-acid biosynthesis; L-arginine biosynthesis; L-arginine from L-ornithine and carbamoyl phosphate: step 1/3. Functionally, reversibly catalyzes the transfer of the carbamoyl group from carbamoyl phosphate (CP) to the N(epsilon) atom of ornithine (ORN) to produce L-citrulline. This is Ornithine carbamoyltransferase from Prochlorococcus marinus (strain MIT 9312).